A 206-amino-acid chain; its full sequence is Small ribosomal subunit protein uS4 (206 aa).

The S4 RNA-binding domain occupies 96–158 (SRLDNVVYRM…AKKQLRIQNA (63 aa)).

This sequence belongs to the universal ribosomal protein uS4 family. As to quaternary structure, part of the 30S ribosomal subunit. Contacts protein S5. The interaction surface between S4 and S5 is involved in control of translational fidelity.

In terms of biological role, one of the primary rRNA binding proteins, it binds directly to 16S rRNA where it nucleates assembly of the body of the 30S subunit. Functionally, with S5 and S12 plays an important role in translational accuracy. The chain is Small ribosomal subunit protein uS4 from Francisella tularensis subsp. holarctica (strain OSU18).